Here is a 436-residue protein sequence, read N- to C-terminus: 3-ketoacyl-CoA thiolase (436 aa).

Cysteine 99 acts as the Acyl-thioester intermediate in catalysis. Residues histidine 392 and cysteine 422 each act as proton acceptor in the active site.

The protein belongs to the thiolase-like superfamily. Thiolase family. In terms of assembly, heterotetramer of two alpha chains (FadJ) and two beta chains (FadI).

Its subcellular location is the cytoplasm. It catalyses the reaction an acyl-CoA + acetyl-CoA = a 3-oxoacyl-CoA + CoA. Its pathway is lipid metabolism; fatty acid beta-oxidation. Functionally, catalyzes the final step of fatty acid oxidation in which acetyl-CoA is released and the CoA ester of a fatty acid two carbons shorter is formed. The sequence is that of 3-ketoacyl-CoA thiolase from Shigella dysenteriae serotype 1 (strain Sd197).